We begin with the raw amino-acid sequence, 284 residues long: uncharacterized protein (284 aa).

The disordered stretch occupies residues 236 to 284 (IDITNEADSSEIIDSEPSNKDETEKPSAQETDPFDGKPVDIKDDELPFD). 2 stretches are compositionally biased toward basic and acidic residues: residues 252-262 (PSNKDETEKPS) and 269-284 (FDGK…LPFD).

This is an uncharacterized protein from Bacillus subtilis (strain 168).